Consider the following 298-residue polypeptide: Acetylglutamate kinase (298 aa).

Substrate contacts are provided by residues 64–65 (GG), R86, and N195.

It belongs to the acetylglutamate kinase family. ArgB subfamily.

Its subcellular location is the cytoplasm. The enzyme catalyses N-acetyl-L-glutamate + ATP = N-acetyl-L-glutamyl 5-phosphate + ADP. It participates in amino-acid biosynthesis; L-arginine biosynthesis; N(2)-acetyl-L-ornithine from L-glutamate: step 2/4. In terms of biological role, catalyzes the ATP-dependent phosphorylation of N-acetyl-L-glutamate. This chain is Acetylglutamate kinase, found in Aquifex aeolicus (strain VF5).